The chain runs to 325 residues: Large ribosomal subunit protein uL1m (325 aa).

The transit peptide at 1 to 50 (MAATVRCFGRVLIHHQRCSLATVTSQTSLYPCCIYVPVPNRHFAAAAKPA) directs the protein to the mitochondrion. Residues 47–66 (AKPAKKTKKGTKEKASNEKK) are disordered. A compositionally biased stretch (basic and acidic residues) spans 56–66 (GTKEKASNEKK).

Belongs to the universal ribosomal protein uL1 family.

The protein localises to the mitochondrion. This chain is Large ribosomal subunit protein uL1m (MRPL1), found in Bos taurus (Bovine).